The chain runs to 201 residues: Recombination protein RecR (201 aa).

Residues Cys-55–Cys-70 form a C4-type zinc finger. Residues Gly-78–Pro-173 form the Toprim domain.

Belongs to the RecR family.

Functionally, may play a role in DNA repair. It seems to be involved in an RecBC-independent recombinational process of DNA repair. It may act with RecF and RecO. The sequence is that of Recombination protein RecR from Treponema pallidum (strain Nichols).